We begin with the raw amino-acid sequence, 682 residues long: MDFREILLIASKGQGVNHVPKRYSLAVGPPKKDPKVKGVQSAAVQAFLRRKEEELRQKALEEKKRKEELVKKRIELKHDKKARAMAKRTKDNFHGYDGIPVEEKTKKKQLVESHLNQGTDQEYDVEEEDFIDYNQAELDQDYEEEQEPPKAESKPKAPLKSAPSPMNFTDLLRLAEKKQFEPVEIKVVKKAEDRPLTAEELREREFLERKHRKKKPEPDAKLPPPVLKKAPSHKDIMGTKPSRGAGDRQLASKGLPFPQAEKKFRPSTASEKQAALSSPKSLPGERTKVGSGSSTQPSLREGHNRPVFNGAGKPRPSTCSPSVPKTPASGTQKSASEHKAKKPLPSHPSHSKPGPTVLSHNKSKSPGVRQPGSNSGSAPGQPNPGTARPTLSSGPVPRRQNGSSSSGPEQSAGGIRKLASNSHLSGRTLNGTNGPGRPASSSSGPGRPISGSAGSGRPVGSSGGPGQPVNNPHDLRRPMNSLSSPGRAVSGPGRSISGSIPAGRTVNSGPGRPVSSLGPGRAVSNPGLPTKPRCTVVSETISSKNIISRSSNGQINGMKPLLSGYRSAQGPQRLPFPTGYKRPREYEEDDDDEYDSEMDDFIEDEGEPQEEISKHIREIFGYDRKKYKDESDYALRYMESSWKEQQKEEAKSLRLGMQEDLEEMRREEEELKRRKAKKLKRH.

Positions 1–569 (MDFREILLIA…PLLSGYRSAQ (569 aa)) are important for interaction with DNA. K37 is covalently cross-linked (Glycyl lysine isopeptide (Lys-Gly) (interchain with G-Cter in SUMO2)). The stretch at 46–82 (AFLRRKEEELRQKALEEKKRKEELVKKRIELKHDKKA) forms a coiled coil. Positions 80 to 170 (KKARAMAKRT…SAPSPMNFTD (91 aa)) are disordered. Over residues 101-111 (VEEKTKKKQLV) the composition is skewed to basic and acidic residues. Over residues 121 to 131 (QEYDVEEEDFI) the composition is skewed to acidic residues. The span at 156 to 165 (KAPLKSAPSP) shows a compositional bias: low complexity. K186 participates in a covalent cross-link: Glycyl lysine isopeptide (Lys-Gly) (interchain with G-Cter in SUMO2). Over residues 187–208 (VVKKAEDRPLTAEELREREFLE) the composition is skewed to basic and acidic residues. Disordered regions lie at residues 187 to 533 (VVKK…TKPR) and 549 to 595 (RSSN…DEYD). Polar residues-rich tracts occupy residues 267–280 (STAS…SSPK), 317–334 (STCS…TQKS), 371–393 (PGSN…TLSS), 400–409 (QNGSSSSGPE), and 419–432 (ASNS…LNGT). A Phosphoserine modification is found at S277. Low complexity-rich tracts occupy residues 435 to 460 (PGRP…RPVG) and 490 to 504 (SGPG…PAGR). Positions 570 to 682 (GPQRLPFPTG…RRKAKKLKRH (113 aa)) are important for interaction with histones. K581 carries the post-translational modification N6-acetyllysine. Positions 586 to 595 (YEEDDDDEYD) are enriched in acidic residues. Position 596 is a phosphoserine (S596). Basic and acidic residues-rich tracts occupy residues 641–652 (SWKEQQKEEAKS) and 663–672 (EMRREEEELK). Residues 641–682 (SWKEQQKEEAKSLRLGMQEDLEEMRREEEELKRRKAKKLKRH) are disordered. Residues 642–682 (WKEQQKEEAKSLRLGMQEDLEEMRREEEELKRRKAKKLKRH) adopt a coiled-coil conformation. Residues 673–682 (RRKAKKLKRH) show a composition bias toward basic residues.

It belongs to the SPT2 family. Interacts with histones. Interacts with a heterotetrameric complex formed by histone H3 and H4, especially when the histone tetramer is not bound to DNA. Interacts with histone H3.3.

Its subcellular location is the nucleus. It is found in the nucleolus. Functionally, histone chaperone that stabilizes pre-existing histone tetramers and regulates replication-independent histone exchange on chromatin. Required for normal chromatin refolding in the coding region of transcribed genes, and for the suppression of spurious transcription. Binds DNA and histones and promotes nucleosome assembly (in vitro). Facilitates formation of tetrameric histone complexes containing histone H3 and H4. Modulates RNA polymerase 1-mediated transcription. Binds DNA, with a preference for branched DNA species, such as Y-form DNA and Holliday junction DNA. This chain is Protein SPT2 homolog (Spty2d1), found in Mus musculus (Mouse).